A 450-amino-acid polypeptide reads, in one-letter code: ATP-dependent protease ATPase subunit HslU (450 aa).

ATP-binding positions include I18 and 60–65 (GVGKTE). Polar residues predominate over residues 140 to 151 (KTSSSGWAQQQE). Residues 140–162 (KTSSSGWAQQQEETPENDDQRGT) form a disordered region. D263, E328, and R400 together coordinate ATP.

The protein belongs to the ClpX chaperone family. HslU subfamily. In terms of assembly, a double ring-shaped homohexamer of HslV is capped on each side by a ring-shaped HslU homohexamer. The assembly of the HslU/HslV complex is dependent on binding of ATP.

The protein localises to the cytoplasm. In terms of biological role, ATPase subunit of a proteasome-like degradation complex; this subunit has chaperone activity. The binding of ATP and its subsequent hydrolysis by HslU are essential for unfolding of protein substrates subsequently hydrolyzed by HslV. HslU recognizes the N-terminal part of its protein substrates and unfolds these before they are guided to HslV for hydrolysis. The chain is ATP-dependent protease ATPase subunit HslU from Idiomarina loihiensis (strain ATCC BAA-735 / DSM 15497 / L2-TR).